Here is a 364-residue protein sequence, read N- to C-terminus: MVKFDTKLWKAVLMMSMINIGLSVVNVMFKKMIDEGLNRMVATTYRLAVGTLFLIPFAIFLERHNRPKLTGRILCSLFFSALLGTSLVQYFFLIGLEYTSSTFSLAFSNMVPSVTFALALVFRQETLNIKSNVGRAKLLGTMICICGALVLTLYKGTALSREHSTHMETHTRTDSTGAMTQKWAMGSIMLVISIIIWSSWFIVQAKISRVYPCQYTSTTILSFFGVIQSALLSLISERSTSMWVVKDKFQVLALLYSGIVGSGLCYVGMSWCLRQRGAVFTSSFIPLIQVFAAIFSFSFLHEQIYCGSVIGSMVIIVGLYILLWGKSKDKSASVTKQEPLDLDIEGCGTAPKELNSTAHQVSAK.

10 helical membrane-spanning segments follow: residues 9-29, 41-61, 76-96, 102-122, 138-158, 183-203, 215-235, 251-271, 277-297, and 304-324; these read WKAV…NVMF, VATT…AIFL, SLFF…LIGL, TFSL…ALVF, LLGT…KGTA, WAMG…WFIV, YTST…LSLI, VLAL…GMSW, GAVF…IFSF, and IYCG…ILLW. 2 consecutive EamA domains span residues 26 to 152 and 195 to 323; these read NVMF…LVLT and IIWS…YILL.

The protein belongs to the drug/metabolite transporter (DMT) superfamily. Plant drug/metabolite exporter (P-DME) (TC 2.A.7.4) family.

The protein resides in the membrane. In Arabidopsis thaliana (Mouse-ear cress), this protein is WAT1-related protein At3g30340.